Consider the following 178-residue polypeptide: CDP-archaeol synthase (178 aa).

Helical transmembrane passes span 7–27, 56–76, 91–111, 125–145, and 149–169; these read LFVS…ACIF, FFGV…SNLG, VIIG…GSFL, VLDQ…YYLV, and ISIT…IIAY.

Belongs to the CDP-archaeol synthase family. Mg(2+) is required as a cofactor.

It is found in the cell membrane. The enzyme catalyses 2,3-bis-O-(geranylgeranyl)-sn-glycerol 1-phosphate + CTP + H(+) = CDP-2,3-bis-O-(geranylgeranyl)-sn-glycerol + diphosphate. It participates in membrane lipid metabolism; glycerophospholipid metabolism. In terms of biological role, catalyzes the formation of CDP-2,3-bis-(O-geranylgeranyl)-sn-glycerol (CDP-archaeol) from 2,3-bis-(O-geranylgeranyl)-sn-glycerol 1-phosphate (DGGGP) and CTP. This reaction is the third ether-bond-formation step in the biosynthesis of archaeal membrane lipids. This chain is CDP-archaeol synthase, found in Methanococcus vannielii (strain ATCC 35089 / DSM 1224 / JCM 13029 / OCM 148 / SB).